A 282-amino-acid chain; its full sequence is ATP synthase gamma chain (282 aa).

The protein belongs to the ATPase gamma chain family. F-type ATPases have 2 components, CF(1) - the catalytic core - and CF(0) - the membrane proton channel. CF(1) has five subunits: alpha(3), beta(3), gamma(1), delta(1), epsilon(1). CF(0) has three main subunits: a, b and c.

It is found in the cell membrane. Its function is as follows. Produces ATP from ADP in the presence of a proton gradient across the membrane. The gamma chain is believed to be important in regulating ATPase activity and the flow of protons through the CF(0) complex. In Clostridium botulinum (strain Loch Maree / Type A3), this protein is ATP synthase gamma chain.